A 96-amino-acid chain; its full sequence is Large ribosomal subunit protein bL21 (96 aa).

The segment covering 73–84 (KRRKRYQSRNGH) has biased composition (basic residues). Residues 73 to 96 (KRRKRYQSRNGHRQQMTQIEVVSL) form a disordered region. Polar residues predominate over residues 85-96 (RQQMTQIEVVSL).

Belongs to the bacterial ribosomal protein bL21 family. Part of the 50S ribosomal subunit. Contacts protein L20.

This protein binds to 23S rRNA in the presence of protein L20. This chain is Large ribosomal subunit protein bL21, found in Chlorobium luteolum (strain DSM 273 / BCRC 81028 / 2530) (Pelodictyon luteolum).